Here is a 197-residue protein sequence, read N- to C-terminus: Cytochrome c oxidase polypeptide 5, mitochondrial (197 aa).

The transit peptide at Met1–Ser13 directs the protein to the mitochondrion. The Mitochondrial matrix portion of the chain corresponds to Ser14 to Lys129. Residues Val130–Phe147 traverse the membrane as a helical segment. Residues Ala148–Gln197 are Mitochondrial intermembrane-facing.

This sequence belongs to the cytochrome c oxidase IV family. In terms of assembly, component of the cytochrome c oxidase (complex IV, CIV), a multisubunit enzyme composed of a catalytic core of 3 subunits and seevral supernumerary subunits. The complex exists as a monomer or a dimer and forms supercomplexes (SCs) in the inner mitochondrial membrane with ubiquinol-cytochrome c oxidoreductase (cytochrome b-c1 complex, complex III, CIII).

Its subcellular location is the mitochondrion inner membrane. It functions in the pathway energy metabolism; oxidative phosphorylation. Component of the cytochrome c oxidase, the last enzyme in the mitochondrial electron transport chain which drives oxidative phosphorylation. The respiratory chain contains 3 multisubunit complexes succinate dehydrogenase (complex II, CII), ubiquinol-cytochrome c oxidoreductase (cytochrome b-c1 complex, complex III, CIII) and cytochrome c oxidase (complex IV, CIV), that cooperate to transfer electrons derived from NADH and succinate to molecular oxygen, creating an electrochemical gradient over the inner membrane that drives transmembrane transport and the ATP synthase. Cytochrome c oxidase is the component of the respiratory chain that catalyzes the reduction of oxygen to water. Electrons originating from reduced cytochrome c in the intermembrane space (IMS) are transferred via the dinuclear copper A center (CU(A)) of subunit 2 and heme A of subunit 1 to the active site in subunit 1, a binuclear center (BNC) formed by heme A3 and copper B (CU(B)). The BNC reduces molecular oxygen to 2 water molecules using 4 electrons from cytochrome c in the IMS and 4 protons from the mitochondrial matrix. The chain is Cytochrome c oxidase polypeptide 5, mitochondrial (cox5) from Aspergillus niger.